The primary structure comprises 368 residues: DNA replication and repair protein RecF (368 aa).

Residue 30–37 coordinates ATP; the sequence is GNNAQGKT.

It belongs to the RecF family.

The protein localises to the cytoplasm. Its function is as follows. The RecF protein is involved in DNA metabolism; it is required for DNA replication and normal SOS inducibility. RecF binds preferentially to single-stranded, linear DNA. It also seems to bind ATP. In Streptococcus pyogenes serotype M4 (strain MGAS10750), this protein is DNA replication and repair protein RecF.